The chain runs to 318 residues: 4-hydroxy-3-methylbut-2-enyl diphosphate reductase (318 aa).

Residue Cys12 coordinates [4Fe-4S] cluster. The (2E)-4-hydroxy-3-methylbut-2-enyl diphosphate site is built by His41 and His74. Positions 41 and 74 each coordinate dimethylallyl diphosphate. Residues His41 and His74 each coordinate isopentenyl diphosphate. Cys96 contributes to the [4Fe-4S] cluster binding site. (2E)-4-hydroxy-3-methylbut-2-enyl diphosphate is bound at residue His124. Residue His124 participates in dimethylallyl diphosphate binding. His124 contacts isopentenyl diphosphate. Catalysis depends on Glu126, which acts as the Proton donor. Residue Thr167 coordinates (2E)-4-hydroxy-3-methylbut-2-enyl diphosphate. Cys197 provides a ligand contact to [4Fe-4S] cluster. Residues Ser225, Ser226, Asn227, and Ser269 each coordinate (2E)-4-hydroxy-3-methylbut-2-enyl diphosphate. Residues Ser225, Ser226, Asn227, and Ser269 each coordinate dimethylallyl diphosphate. Isopentenyl diphosphate-binding residues include Ser225, Ser226, Asn227, and Ser269.

This sequence belongs to the IspH family. [4Fe-4S] cluster is required as a cofactor.

It carries out the reaction isopentenyl diphosphate + 2 oxidized [2Fe-2S]-[ferredoxin] + H2O = (2E)-4-hydroxy-3-methylbut-2-enyl diphosphate + 2 reduced [2Fe-2S]-[ferredoxin] + 2 H(+). It catalyses the reaction dimethylallyl diphosphate + 2 oxidized [2Fe-2S]-[ferredoxin] + H2O = (2E)-4-hydroxy-3-methylbut-2-enyl diphosphate + 2 reduced [2Fe-2S]-[ferredoxin] + 2 H(+). Its pathway is isoprenoid biosynthesis; dimethylallyl diphosphate biosynthesis; dimethylallyl diphosphate from (2E)-4-hydroxy-3-methylbutenyl diphosphate: step 1/1. The protein operates within isoprenoid biosynthesis; isopentenyl diphosphate biosynthesis via DXP pathway; isopentenyl diphosphate from 1-deoxy-D-xylulose 5-phosphate: step 6/6. In terms of biological role, catalyzes the conversion of 1-hydroxy-2-methyl-2-(E)-butenyl 4-diphosphate (HMBPP) into a mixture of isopentenyl diphosphate (IPP) and dimethylallyl diphosphate (DMAPP). Acts in the terminal step of the DOXP/MEP pathway for isoprenoid precursor biosynthesis. This is 4-hydroxy-3-methylbut-2-enyl diphosphate reductase from Francisella philomiragia subsp. philomiragia (strain ATCC 25017 / CCUG 19701 / FSC 153 / O#319-036).